Reading from the N-terminus, the 141-residue chain is Photosystem I reaction center subunit IV A, chloroplastic (141 aa).

The transit peptide at M1–R49 directs the protein to the chloroplast. Residues P57–A73 are compositionally biased toward low complexity. A disordered region spans residues P57–G83.

It belongs to the PsaE family. In terms of processing, 2 isoforms exists (ratio 1:1). With or without the N-terminal alanine.

Its subcellular location is the plastid. The protein localises to the chloroplast thylakoid membrane. Functionally, stabilizes the interaction between PsaC and the PSI core, assists the docking of the ferredoxin to PSI and interacts with ferredoxin-NADP oxidoreductase. This Nicotiana sylvestris (Wood tobacco) protein is Photosystem I reaction center subunit IV A, chloroplastic (PSAEA).